The chain runs to 216 residues: Phosphorylated carbohydrates phosphatase TM_1254 (216 aa).

D7 (nucleophile) is an active-site residue.

It belongs to the HAD-like hydrolase superfamily. Co(2+) is required as a cofactor. Mg(2+) serves as cofactor. Requires Mn(2+) as cofactor. The cofactor is Ni(2+).

Functionally, displays high phosphatase activity toward erythrose 4-phosphate, fructose 6-phosphate, 2-deoxyglucose 6-phosphate, and mannose 6-phosphate. May have a role in the intracellular metabolism of many phosphorylated carbohydrates. This is Phosphorylated carbohydrates phosphatase TM_1254 from Thermotoga maritima (strain ATCC 43589 / DSM 3109 / JCM 10099 / NBRC 100826 / MSB8).